Consider the following 89-residue polypeptide: Large ribosomal subunit protein bL28 (89 aa).

This sequence belongs to the bacterial ribosomal protein bL28 family.

This chain is Large ribosomal subunit protein bL28, found in Chlamydia trachomatis serovar L2 (strain ATCC VR-902B / DSM 19102 / 434/Bu).